A 170-amino-acid chain; its full sequence is Large ribosomal subunit protein uL5 (170 aa).

Belongs to the universal ribosomal protein uL5 family. In terms of assembly, part of the 50S ribosomal subunit; contacts the 5S rRNA and probably tRNA. Forms a bridge to the 30S subunit in the 70S ribosome.

In terms of biological role, this is one of the proteins that bind and probably mediate the attachment of the 5S RNA into the large ribosomal subunit, where it forms part of the central protuberance. In the 70S ribosome it contacts protein S13 of the 30S subunit (bridge B1b), connecting the 2 subunits; this bridge is implicated in subunit movement. May contact the P site tRNA; the 5S rRNA and some of its associated proteins might help stabilize positioning of ribosome-bound tRNAs. The chain is Large ribosomal subunit protein uL5 from Thermoplasma acidophilum (strain ATCC 25905 / DSM 1728 / JCM 9062 / NBRC 15155 / AMRC-C165).